Here is a 271-residue protein sequence, read N- to C-terminus: Ribosomal RNA small subunit methyltransferase A (271 aa).

S-adenosyl-L-methionine is bound by residues histidine 11, leucine 13, glycine 38, glutamate 58, aspartate 86, and asparagine 101.

Belongs to the class I-like SAM-binding methyltransferase superfamily. rRNA adenine N(6)-methyltransferase family. RsmA subfamily.

The protein resides in the cytoplasm. It carries out the reaction adenosine(1518)/adenosine(1519) in 16S rRNA + 4 S-adenosyl-L-methionine = N(6)-dimethyladenosine(1518)/N(6)-dimethyladenosine(1519) in 16S rRNA + 4 S-adenosyl-L-homocysteine + 4 H(+). Functionally, specifically dimethylates two adjacent adenosines (A1518 and A1519) in the loop of a conserved hairpin near the 3'-end of 16S rRNA in the 30S particle. May play a critical role in biogenesis of 30S subunits. The polypeptide is Ribosomal RNA small subunit methyltransferase A (Helicobacter pylori (strain ATCC 700392 / 26695) (Campylobacter pylori)).